A 1877-amino-acid chain; its full sequence is Neuron navigator 1 (1877 aa).

Residue Met-1 is modified to N-acetylmethionine. The segment at 1–59 (MLGSSVKSVQPEVELSSGGGDEGADEPRGAGRKAAAADGRGMLPKRAKAPGGGGGMAKA) is disordered. Residues 32 to 41 (RKAAAADGRG) are compositionally biased toward low complexity. Ser-90, Ser-142, and Ser-152 each carry phosphoserine. The interval 114–225 (DMAKAPKGLG…PVPSAKGQEE (112 aa)) is disordered. Residue Thr-159 is modified to Phosphothreonine. A phosphoserine mark is found at Ser-194 and Ser-199. A compositionally biased stretch (low complexity) spans 205–214 (SSKAKAQKSS). The stretch at 255–280 (ESQRKRTVQNVLDLRQNLEETMSSLR) forms a coiled coil. Residues 294-336 (YDSDDANPRSVSSLSNRSSPLSWRYGQSSPRLQAGDAPSVGGS) form a disordered region. Phosphoserine is present on residues Ser-296, Ser-308, Ser-312, Ser-362, and Ser-391. The span at 301 to 315 (PRSVSSLSNRSSPLS) shows a compositional bias: low complexity. Disordered regions lie at residues 386–839 (KSGY…PLPS) and 892–989 (MSLP…PMSL). Composition is skewed to low complexity over residues 411–425 (DESSSISSGLSDASD) and 433–448 (NASSSLNSLPSTPTAS). Residues Ser-452, Ser-474, Ser-476, and Ser-490 each carry the phosphoserine modification. Residues 476-486 (SEEKAPKKLEY) show a composition bias toward basic and acidic residues. Residues 503 to 519 (ERPESCDDSSKGGELKK) are compositionally biased toward basic and acidic residues. Ser-528 is subject to Phosphoserine. Position 534 is a phosphothreonine (Thr-534). Ser-541 is modified (phosphoserine). Thr-544 carries the phosphothreonine modification. Residues 555 to 566 (GKPEGKATDKGK) show a composition bias toward basic and acidic residues. Position 572 is a phosphothreonine (Thr-572). Residues 581–591 (AGRDRLSDAKK) show a composition bias toward basic and acidic residues. Composition is skewed to polar residues over residues 615–635 (GTATVMQTGGSATLSKIQKSS) and 645–655 (RKTSLDVSNSA). Phosphoserine is present on Ser-648. Arg-688 carries the post-translational modification Omega-N-methylarginine. Polar residues-rich tracts occupy residues 698-710 (IDPSLLSTKQGGL) and 724-733 (GRTTPAPVNQ). Residues 731-756 (VNQTDREKEKAKAKAVALDSDNISLK) are a coiled coil. Phosphoserine is present on residues Ser-750, Ser-754, Ser-760, Ser-797, and Ser-808. A compositionally biased stretch (polar residues) spans 751 to 773 (DNISLKSIGSPESTPKNQASHPT). The segment covering 805-818 (NSNSLDLPSSSDTT) has biased composition (low complexity). Positions 902-913 (TPVPTPPAPPAA) are enriched in pro residues. Position 1000 is a phosphoserine (Ser-1000). Thr-1006 bears the Phosphothreonine mark. Residues 1072 to 1163 (SSAEERMQSE…SEAQAVIQGA (92 aa)) are a coiled coil. Thr-1170 carries the post-translational modification Phosphothreonine. 4 disordered regions span residues 1172–1204 (KELRIKRQNSSDSISSLNSITSHSSIGSSKDAD), 1244–1306 (ATPD…EKKE), 1359–1383 (LKVAPGPSSGSTPGQVPGSSALSSP), and 1810–1843 (KLYHLPPPTVGPHSIASPPEDRTVKDSTPSSLDS). Phosphoserine is present on Ser-1181. The segment covering 1181-1200 (SSDSISSLNSITSHSSIGSS) has biased composition (low complexity). The span at 1246–1264 (PDSSAPSSPKLQHGSTETA) shows a compositional bias: polar residues. A Phosphoserine modification is found at Ser-1265. Low complexity predominate over residues 1265–1275 (SPSIKSSTSSS). A coiled-coil region spans residues 1303–1362 (EKKEVSELRSELWEKEMKLTDIRLEALNSAHQLDQLRETMHNMQLEVDLLKAENDRLKVA). The span at 1366–1383 (SSGSTPGQVPGSSALSSP) shows a compositional bias: polar residues. Ser-1382 carries the post-translational modification Phosphoserine.

The protein belongs to the Nav/unc-53 family. As to quaternary structure, interacts with tubulin. Broadly expressed at low levels. Expressed at high levels in heart, skeletal muscle and placenta.

The protein localises to the cytoplasm. It localises to the cytoskeleton. May be involved in neuronal migration. This Homo sapiens (Human) protein is Neuron navigator 1 (NAV1).